The chain runs to 90 residues: Probable Fe(2+)-trafficking protein (90 aa).

It belongs to the Fe(2+)-trafficking protein family.

Functionally, could be a mediator in iron transactions between iron acquisition and iron-requiring processes, such as synthesis and/or repair of Fe-S clusters in biosynthetic enzymes. In Vibrio campbellii (strain ATCC BAA-1116), this protein is Probable Fe(2+)-trafficking protein.